Here is a 317-residue protein sequence, read N- to C-terminus: Universal stress protein MT2052 (317 aa).

Residues G13, G128–A134, S142–V143, G175, D208, G277–G283, and S291–S293 contribute to the ATP site.

The protein belongs to the universal stress protein A family.

The protein is Universal stress protein MT2052 of Mycobacterium tuberculosis (strain CDC 1551 / Oshkosh).